A 1400-amino-acid polypeptide reads, in one-letter code: DNA-directed RNA polymerase subunit beta' (1400 aa).

Zn(2+) is bound by residues Cys70, Cys72, Cys85, and Cys88. Positions 460, 462, and 464 each coordinate Mg(2+). Zn(2+) contacts are provided by Cys814, Cys888, Cys895, and Cys898. Residues 1368–1400 form a disordered region; it reads RQAKRAEAQEGPSAEQATDNLAALLNAGFSSDE.

This sequence belongs to the RNA polymerase beta' chain family. As to quaternary structure, the RNAP catalytic core consists of 2 alpha, 1 beta, 1 beta' and 1 omega subunit. When a sigma factor is associated with the core the holoenzyme is formed, which can initiate transcription. Mg(2+) is required as a cofactor. It depends on Zn(2+) as a cofactor.

The enzyme catalyses RNA(n) + a ribonucleoside 5'-triphosphate = RNA(n+1) + diphosphate. Functionally, DNA-dependent RNA polymerase catalyzes the transcription of DNA into RNA using the four ribonucleoside triphosphates as substrates. The chain is DNA-directed RNA polymerase subunit beta' from Vibrio parahaemolyticus serotype O3:K6 (strain RIMD 2210633).